We begin with the raw amino-acid sequence, 726 residues long: MGFLIGGSCFVPSVPLHSRFLSSPSSSSSSSPSSSQFGLLCSSNVAKFKRRRPTLASLNQEDGYEYDVASAKRRAFLLVGISVLPFLQLRSPALADERGNEIKTSKVDLETEVAVVSEGTSPNPFLALLNGLGIFSAGVLGALYALARQDTKAAEETIESLKNQLKDRERALVLKEKDFEAKLQHEQEERKKEVEKAKEEQLSLINQLNSAKDLVTELGRELSSEKKLCEKLKDQIESLENSLSKAGEDKEALETKLREKLDLVEGLQDRINLLSLELKDSEEKAQRFNASLAKKEAELKELNSIYTQTSRDLAEAKLEIKQQKEELIRTQSELDSKNSAIEELNTRITTLVAEKESYIQKLDSISKDYSALKLTSETQAAADAELISRKEQEIQQLNENLDRALDDVNKSKDKVADLTEKYEDSKRMLDIELTTVKNLRHELEGTKKTLQASRDRVSDLETMLDESRALCSKLESELAIVHEEWKEAKERYERNLDAEKQKNEISASELALEKDLRRRVKDELEGVTHELKESSVKNQSLQKELVEIYKKVETSNKELEEEKKTVLSLNKEVKGMEKQILMEREARKSLETDLEEAVKSLDEMNKNTSILSRELEKVNTHASNLEDEKEVLQRSLGEAKNASKEAKENVEDAHILVMSLGKEREVLEKKVKKLEEDLGSAKGEILRMRSQPDSVKAVNSTDNKEKSDNTVTVKKVVRRRKSSTSS.

The N-terminal 41 residues, 1-41 (MGFLIGGSCFVPSVPLHSRFLSSPSSSSSSSPSSSQFGLLC), are a transit peptide targeting the chloroplast. Residues 42–95 (SSNVAKFKRRRPTLASLNQEDGYEYDVASAKRRAFLLVGISVLPFLQLRSPALA) constitute a thylakoid transit peptide. Residues 96–124 (DERGNEIKTSKVDLETEVAVVSEGTSPNP) are Lumenal, thylakoid-facing. Residues 125-145 (FLALLNGLGIFSAGVLGALYA) form a helical membrane-spanning segment. Residues 144–691 (YALARQDTKA…KGEILRMRSQ (548 aa)) adopt a coiled-coil conformation. Residues 146-726 (LARQDTKAAE…VRRRKSSTSS (581 aa)) lie on the Stromal side of the membrane. The segment at 678-726 (LGSAKGEILRMRSQPDSVKAVNSTDNKEKSDNTVTVKKVVRRRKSSTSS) is disordered. The span at 691–701 (QPDSVKAVNST) shows a compositional bias: polar residues. Residues 715 to 722 (KVVRRRKS) carry the Nuclear localization signal motif. Positions 715 to 726 (KVVRRRKSSTSS) are enriched in basic residues.

In terms of assembly, interacts with PTST2; the interaction is essential for the initiation of starch granules biosynthesis in leaf chloroplasts, for the correct location of the process in the stromal spaces between the thylakoid membranes, and for the association of PTST2 with the thylakoid membranes. In terms of processing, predicted to be translocated into the thylakoid by the Tat system. The position of the transit peptide cleavages have not been experimentally proven.

The protein localises to the plastid. It is found in the chloroplast. The protein resides in the chloroplast thylakoid membrane. It localises to the chloroplast stroma. Its subcellular location is the chloroplast nucleoid. The protein localises to the nucleus. It is found in the nucleus matrix. In terms of biological role, DNA-binding protein required for the initiation of starch granules biosynthesis in leaf chloroplasts. Anchored to the thylakoid membranes with its C-terminus facing into the stroma where it is essential for localizing PTST2 and SS4 to the stromal spaces between the thylakoid membranes in order to begin starch granule formation. Associated with leaf chloroplastic nucleoids in vivo. Binds to various chloroplastic double-stranded DNA fragments without particular sequence specificity in vitro. May function at the interface between nucleoids and thylakoids possibly by anchoring nucleoids to the thylakoid membrane system in mature chloroplasts. Likely to participate in nuclear architecture by connecting chromatin with the nuclear matrix and potentially with the nuclear envelope. The polypeptide is MAR-binding filament-like protein 1 (Arabidopsis thaliana (Mouse-ear cress)).